The sequence spans 661 residues: Phospholipid:diacylglycerol acyltransferase (661 aa).

Positions 1-71 (MGTLFRRNVQ…FDRKRDGNGR (71 aa)) are disordered. The Cytoplasmic portion of the chain corresponds to 1 to 80 (MGTLFRRNVQ…RKRWRDSRRL (80 aa)). Residues 34-48 (HIHHQQGLGHKRRRG) show a composition bias toward basic residues. 2 consecutive short sequence motifs (bipartite nuclear localization signal) follow at residues 43 to 50 (HKRRRGIS) and 64 to 71 (RKRDGNGR). The span at 54 to 70 (KRNERGKDFDRKRDGNG) shows a compositional bias: basic and acidic residues. Residues 81–101 (IFILGAFLGVLLPFSFGAYHV) form a helical membrane-spanning segment. The Lumenal segment spans residues 102-661 (HNSDSDLFDN…QWVSQMPFPM (560 aa)). Glutamine 162 is a substrate binding site. The GHSXG lipase motif signature appears at 322 to 326 (GHSMG). Serine 324 (acyl-ester intermediate) is an active-site residue. Residue methionine 325 participates in substrate binding. Residues asparagine 453, asparagine 461, and asparagine 469 are each glycosylated (N-linked (GlcNAc...) asparagine). Residue aspartate 567 is the Charge relay system of the active site. N-linked (GlcNAc...) asparagine glycosylation is present at asparagine 594. Histidine 618 (charge relay system) is an active-site residue.

Belongs to the AB hydrolase superfamily. Lipase family.

The protein resides in the endoplasmic reticulum membrane. It is found in the nucleus inner membrane. It catalyses the reaction a glycerophospholipid + a 1,2-diacyl-sn-glycerol = a monoacylglycerophospholipid + a triacyl-sn-glycerol. The enzyme catalyses a 1-acyl-sn-glycerol + a 1,2-diacyl-sn-glycero-3-phosphocholine = a 1-acyl-sn-glycero-3-phosphocholine + a 1,2-diacyl-sn-glycerol. The catalysed reaction is 1,2-di-(9Z-octadecenoyl)-sn-glycero-3-phosphoethanolamine + 1,2-di-(9Z-octadecenoyl)-sn-glycerol = 1-(9Z-octadecenoyl)-sn-glycero-3-phosphoethanolamine + 1,2,3-tri-(9Z-octadecenoyl)-glycerol. It carries out the reaction 1,2-di-(9Z-octadecenoyl)-sn-glycerol + 1,2-di-(9Z-octadecenoyl)-sn-glycero-3-phosphocholine = 1,2,3-tri-(9Z-octadecenoyl)-glycerol + 1-(9Z-octadecenoyl)-sn-glycero-3-phosphocholine. It catalyses the reaction 1-(9Z-octadecenoyl)-sn-glycerol + 1,2-di-(9Z-octadecenoyl)-sn-glycero-3-phosphocholine = di-(9Z)-octadecenoylglycerol + 1-(9Z-octadecenoyl)-sn-glycero-3-phosphocholine. The enzyme catalyses 2-(9Z-octadecenoyl)-glycerol + 1,2-di-(9Z-octadecenoyl)-sn-glycero-3-phosphocholine = 1,2-di-(9Z-octadecenoyl)-glycerol + 1-(9Z-octadecenoyl)-sn-glycero-3-phosphocholine. The catalysed reaction is 1-(9Z-octadecenoyl)-2-hexadecanoyl-sn-glycero-3-phosphoethanolamine + 1,2-di-(9Z-octadecenoyl)-sn-glycerol = 1,2-di-(9Z)-octadecenoyl-3-hexadecanoyl-sn-glycerol + 1-(9Z-octadecenoyl)-sn-glycero-3-phosphoethanolamine. It carries out the reaction 1-(9Z-octadecenoyl)-2-octadecanoyl-sn-glycero-3-phosphoethanolamine + 1,2-di-(9Z-octadecenoyl)-sn-glycerol = 1,2-di-(9Z)-octadecenoyl-3-octadecanoyl-sn-glycerol + 1-(9Z-octadecenoyl)-sn-glycero-3-phosphoethanolamine. It catalyses the reaction 1-(9Z)-octadecenoyl-2-(9Z,12Z)-octadecadienoyl-sn-glycero-3-phosphoethanolamine + 1,2-di-(9Z-octadecenoyl)-sn-glycerol = 1,2-di-(9Z)-octadecenoyl-3-(9Z,12Z)-octadecadienoyl-sn-glycerol + 1-(9Z-octadecenoyl)-sn-glycero-3-phosphoethanolamine. Catalyzes triacylglycerol (TAG) formation by an acyl-CoA independent pathway. The enzyme specifically transfers acyl groups from the sn-2 position of a phospholipid to diacylglycerol (DAG), thus forming an sn-1-lysophospholipid. The preferred acyl donors are phosphatidylethanolamine (PE) and phosphatidylcholine (PC). Also capable of using broad acyl donors such as phosphatidic acid (PA), phosphatidylserine (PS), phosphatidylglycerol (PG) and phosphatidylinositol (PI), as well as monogalactosyldiacylglycerol (MGDG), digalactosyldiacylglycerol (DGDG), and acyl-CoA, and it is more likely to use unsaturated acyl donors. As acyl acceptors, it prefers 1,2- over 1,3-diacylglycerol (DAG). Additionally, has esterification activity that can utilize methanol as acyl acceptor to generate fatty acid methyl esters (FAME). Can also utilize ceramide instead of DAG, acylating the ceramides by attaching a fatty acid to the hydroxy group on the first carbon atom of the long-chain base to produce 1-O-acylceramides. Involved in lipid particle synthesis from the endoplasmic reticulum, promoting localized TAG production at discrete ER subdomains. Relocates from the endoplasmic reticulum to a subdomain of the inner nuclear membrane upon nutrient starvation, where it provides a site of TAG synthesis, which is coupled with nuclear membrane remodeling. The chain is Phospholipid:diacylglycerol acyltransferase from Saccharomyces cerevisiae (strain ATCC 204508 / S288c) (Baker's yeast).